The primary structure comprises 53 residues: Minor histocompatibility protein HMSD variant form (53 aa).

In terms of assembly, ACC-6 forms a complex with MHC HLA-B*4403. As to expression, highly expressed in dendritic cells and primary leukemia cells, especially those of myeloid lineage. ACC-6 expression is limited to cells of the hematopoietic lineage.

Functionally, this splice variant of HMSD is the precursor of the histocompatibility antigen ACC-6. More generally, minor histocompatibility antigens (mHags) refer to immunogenic peptide which, when complexed with MHC, can generate an immune response after recognition by specific T-cells. The peptides are derived from polymorphic intracellular proteins, which are cleaved by normal pathways of antigen processing. The binding of these peptides to MHC class I or class II molecules and its expression on the cell surface can stimulate T-cell responses and thereby trigger graft rejection or graft-versus-host disease (GVHD) after hematopoietic stem cell transplantation from HLA-identical sibling donor. GVHD is a frequent complication after bone marrow transplantation (BMT), due to mismatch of minor histocompatibility antigen in HLA-matched sibling marrow transplants. However, associated with GVHD, a favorable graft-versus-leukemia (GVL) can be induced by donor-recipient disparities in mHags. ACC-6 is presented to the cell surface by MHC HLA-B*4403. This complex specifically elicits donor-cytotoxic T-lymphocyte (CTL) reactivity against hematologic malignancies after treatment by HLA-identical allogenic BMT. It induces cell recognition and lysis by CTL. Immunogenicity of most autosomal mHags results from single-nucleotide polymorphisms that cause amino-acid substitutions within epitopes, leading to the differential recognition of peptides between donor and recipient. In Homo sapiens (Human), this protein is Minor histocompatibility protein HMSD variant form (HMSD).